The following is a 239-amino-acid chain: Purine nucleoside phosphorylase DeoD-type (239 aa).

Residue His5 coordinates a purine D-ribonucleoside. Residues Gly21, Arg25, Arg44, and 88 to 91 (RVGS) contribute to the phosphate site. A purine D-ribonucleoside is bound by residues 180–182 (EME) and 204–205 (SD). Residue Asp205 is the Proton donor of the active site.

This sequence belongs to the PNP/UDP phosphorylase family. As to quaternary structure, homohexamer; trimer of homodimers.

It carries out the reaction a purine D-ribonucleoside + phosphate = a purine nucleobase + alpha-D-ribose 1-phosphate. It catalyses the reaction a purine 2'-deoxy-D-ribonucleoside + phosphate = a purine nucleobase + 2-deoxy-alpha-D-ribose 1-phosphate. In terms of biological role, catalyzes the reversible phosphorolytic breakdown of the N-glycosidic bond in the beta-(deoxy)ribonucleoside molecules, with the formation of the corresponding free purine bases and pentose-1-phosphate. The polypeptide is Purine nucleoside phosphorylase DeoD-type (Salmonella agona (strain SL483)).